We begin with the raw amino-acid sequence, 284 residues long: RNase adapter protein RapZ (284 aa).

An ATP-binding site is contributed by 8 to 15 (GRSGSGKS). Residue 56–59 (DVRN) coordinates GTP. The tract at residues 266–284 (RSRGKNVQSRHRTLEKRKP) is RNA-binding.

This sequence belongs to the RapZ-like family. RapZ subfamily. As to quaternary structure, homotrimer.

Modulates the synthesis of GlmS, by affecting the processing and stability of the regulatory small RNA GlmZ. When glucosamine-6-phosphate (GlcN6P) concentrations are high in the cell, RapZ binds GlmZ and targets it to cleavage by RNase E. Consequently, GlmZ is inactivated and unable to activate GlmS synthesis. Under low GlcN6P concentrations, RapZ is sequestered and inactivated by an other regulatory small RNA, GlmY, preventing GlmZ degradation and leading to synthesis of GlmS. This is RNase adapter protein RapZ from Shigella dysenteriae serotype 1 (strain Sd197).